Reading from the N-terminus, the 102-residue chain is Small ribosomal subunit protein uS10 (102 aa).

It belongs to the universal ribosomal protein uS10 family. As to quaternary structure, part of the 30S ribosomal subunit.

Involved in the binding of tRNA to the ribosomes. This is Small ribosomal subunit protein uS10 from Mycoplasma mycoides subsp. mycoides SC (strain CCUG 32753 / NCTC 10114 / PG1).